Reading from the N-terminus, the 66-residue chain is Large ribosomal subunit protein uL29 (66 aa).

Belongs to the universal ribosomal protein uL29 family.

This is Large ribosomal subunit protein uL29 from Petrotoga mobilis (strain DSM 10674 / SJ95).